The sequence spans 65 residues: Large ribosomal subunit protein bL35 (65 aa).

This sequence belongs to the bacterial ribosomal protein bL35 family.

The sequence is that of Large ribosomal subunit protein bL35 from Aeromonas salmonicida (strain A449).